Here is a 311-residue protein sequence, read N- to C-terminus: CD-NTase-associated protein 6 (311 aa).

Residues 84 to 89 (GSGKTE) and 215 to 216 (RR) contribute to the ATP site.

The protein belongs to the AAA ATPase family. Homohexamer. Forms a 1:1:6 CdnC:Cap7:Cap6 complex.

In terms of biological role, regulates complex assembly in a CBASS antivirus system. CBASS (cyclic oligonucleotide-based antiphage signaling system) provides immunity against bacteriophage. The CD-NTase protein synthesizes cyclic nucleotides in response to infection; these serve as specific second messenger signals. The signals activate a diverse range of effectors, leading to bacterial cell death and thus abortive phage infection. A type III-C(AAA) CBASS system. Binds and disassembles an active CdnC:Cap7 (Cap7 is also called HORMA) complex, inhibiting the complex's ability to synthesize cyclic nucleotide second messengers. An AAA+-ATPase remodeler, in the absence of foreign threat Cap6 (also called Trip13) probably maintains the Cap7 protein in its open, inactive state. Once activated (presumably by a bacteriophage protein) Cap7 binds to and activates its cognate CD-NTase (CdnC in this bacteria) to synthesize cAAA, a cyclic nucleotide second messenger. cAAA activates the NucC endonuclease which degrades all DNA in the infected cell, causing cell death and abortive phage infection. Its function is as follows. Protects E.coli strain JP313 against bacteriophage lambda cI- infection. When the cdnC-cap7-cap6-nucC operon is transformed into a susceptible E.coli strain it confers bacteriophage lambda cI- immunity. Mutations in the sensor (Cap7 also called HORMA) or effector proteins (CdnC, NucC) but not the disassembly protein (Cap6 also called Trip13) no longer confer immunity. The presence of the intact operon leads to culture collapse and cell death, which occurs before the phage has finished its replication cycle, thus protecting non-infected bacteria by aborting the phage infection and preventing its propagation. This chain is CD-NTase-associated protein 6, found in Escherichia coli (strain MS 115-1).